A 320-amino-acid chain; its full sequence is Glycerol-3-phosphate dehydrogenase [NAD(P)+] (320 aa).

Residues Phe11, Arg30, and Lys102 each coordinate NADPH. Sn-glycerol 3-phosphate is bound by residues Lys102, Gly130, and Ser132. An NADPH-binding site is contributed by Ala134. The sn-glycerol 3-phosphate site is built by Lys185, Asp238, Ser248, Arg249, and Asn250. Lys185 functions as the Proton acceptor in the catalytic mechanism. Arg249 contacts NADPH. Glu270 serves as a coordination point for NADPH.

This sequence belongs to the NAD-dependent glycerol-3-phosphate dehydrogenase family.

It is found in the cytoplasm. It catalyses the reaction sn-glycerol 3-phosphate + NAD(+) = dihydroxyacetone phosphate + NADH + H(+). It carries out the reaction sn-glycerol 3-phosphate + NADP(+) = dihydroxyacetone phosphate + NADPH + H(+). It participates in membrane lipid metabolism; glycerophospholipid metabolism. Functionally, catalyzes the reduction of the glycolytic intermediate dihydroxyacetone phosphate (DHAP) to sn-glycerol 3-phosphate (G3P), the key precursor for phospholipid synthesis. This Roseobacter denitrificans (strain ATCC 33942 / OCh 114) (Erythrobacter sp. (strain OCh 114)) protein is Glycerol-3-phosphate dehydrogenase [NAD(P)+].